Reading from the N-terminus, the 196-residue chain is Ribonuclease HII (196 aa).

In terms of domain architecture, RNase H type-2 spans 9-196; sequence KLVAGVDEVG…KPVRHALGIE (188 aa). A divalent metal cation is bound by residues Asp15, Glu16, and Asp107.

The protein belongs to the RNase HII family. Requires Mn(2+) as cofactor. Mg(2+) serves as cofactor.

It is found in the cytoplasm. The enzyme catalyses Endonucleolytic cleavage to 5'-phosphomonoester.. Its function is as follows. Endonuclease that specifically degrades the RNA of RNA-DNA hybrids. The protein is Ribonuclease HII of Aeromonas salmonicida (strain A449).